The sequence spans 218 residues: MSDNDELQQIAHLRREYTKGGLRRQDLPAEPLDLFERWLKQACEAKLADPTAMVVATVDENSQPYQRIVLLKHYDEKGLVFYTNLGSRKAHHLENNPRISLLFPWHMLERQVMVTGKAERLSTLEVLKYFHSRPRDSQIGAWVSKQSSRISARGVLESKFLELKQKFQQGEVPLPSFWGGFRVSVEQMEFWQGGEHRLHDRFLYQRDNAAWKIDRLAP.

Substrate contacts are provided by residues 14–17 (RREY) and lysine 72. Residues 67–72 (RIVLLK), 82–83 (YT), arginine 88, lysine 89, and glutamine 111 each bind FMN. Substrate-binding residues include tyrosine 129, arginine 133, and serine 137. Residues 146–147 (QS) and tryptophan 191 contribute to the FMN site. 197-199 (RLH) is a binding site for substrate. Residue arginine 201 participates in FMN binding.

It belongs to the pyridoxamine 5'-phosphate oxidase family. In terms of assembly, homodimer. FMN is required as a cofactor.

It carries out the reaction pyridoxamine 5'-phosphate + O2 + H2O = pyridoxal 5'-phosphate + H2O2 + NH4(+). The catalysed reaction is pyridoxine 5'-phosphate + O2 = pyridoxal 5'-phosphate + H2O2. The protein operates within cofactor metabolism; pyridoxal 5'-phosphate salvage; pyridoxal 5'-phosphate from pyridoxamine 5'-phosphate: step 1/1. It participates in cofactor metabolism; pyridoxal 5'-phosphate salvage; pyridoxal 5'-phosphate from pyridoxine 5'-phosphate: step 1/1. Its function is as follows. Catalyzes the oxidation of either pyridoxine 5'-phosphate (PNP) or pyridoxamine 5'-phosphate (PMP) into pyridoxal 5'-phosphate (PLP). The protein is Pyridoxine/pyridoxamine 5'-phosphate oxidase of Enterobacter sp. (strain 638).